Consider the following 303-residue polypeptide: Probable 5-dehydro-4-deoxyglucarate dehydratase (303 aa).

The protein belongs to the DapA family.

It carries out the reaction 5-dehydro-4-deoxy-D-glucarate + H(+) = 2,5-dioxopentanoate + CO2 + H2O. It participates in carbohydrate acid metabolism; D-glucarate degradation; 2,5-dioxopentanoate from D-glucarate: step 2/2. This Acinetobacter baylyi (strain ATCC 33305 / BD413 / ADP1) protein is Probable 5-dehydro-4-deoxyglucarate dehydratase.